The chain runs to 265 residues: tRNA (guanine-N(1)-)-methyltransferase (265 aa).

S-adenosyl-L-methionine-binding positions include Gly-119 and 139–144 (VGDYIL).

It belongs to the RNA methyltransferase TrmD family. Homodimer.

Its subcellular location is the cytoplasm. It carries out the reaction guanosine(37) in tRNA + S-adenosyl-L-methionine = N(1)-methylguanosine(37) in tRNA + S-adenosyl-L-homocysteine + H(+). In terms of biological role, specifically methylates guanosine-37 in various tRNAs. The chain is tRNA (guanine-N(1)-)-methyltransferase from Pseudoalteromonas atlantica (strain T6c / ATCC BAA-1087).